The primary structure comprises 624 residues: Actin-related protein 8 (624 aa).

Met1 is subject to N-acetylmethionine. The span at 1–25 (MTQAEKGDTENGKEKGGEKEKEQRG) shows a compositional bias: basic and acidic residues. The segment at 1–29 (MTQAEKGDTENGKEKGGEKEKEQRGVKRP) is disordered. Residues Ser55 and Thr56 each contribute to the ATP site. At Ser132 the chain carries Phosphoserine. 283–286 (DVGD) serves as a coordination point for ATP. Phosphoserine is present on Ser412. The interval 430 to 462 (SKQEQSAKATADRKSASKPIGFEGDLRGQSSDL) is disordered.

This sequence belongs to the actin family. ARP8 subfamily. In terms of assembly, component of the chromatin remodeling INO80 complex; specifically part of a complex module associated with the DBINO domain of INO80. Interacts with ACTR5; the interaction is observed in asynchronous (interphase) cells but not in metaphase-arrested cells indicative for a possible dissociation of the INO80 complex in mitotic cells. Exists as monomers and dimers, but the dimer is most probably the biologically relevant form required for stable interactions with histones that exploits the twofold symmetry of the nucleosome core.

Its subcellular location is the nucleus. The protein localises to the chromosome. Its function is as follows. Plays an important role in the functional organization of mitotic chromosomes. Exhibits low basal ATPase activity, and unable to polymerize. Functionally, proposed core component of the chromatin remodeling INO80 complex which is involved in transcriptional regulation, DNA replication and probably DNA repair. Required for the recruitment of INO80 (and probably the INO80 complex) to sites of DNA damage. Strongly prefer nucleosomes and H3-H4 tetramers over H2A-H2B dimers, suggesting it may act as a nucleosome recognition module within the complex. This Homo sapiens (Human) protein is Actin-related protein 8 (ACTR8).